A 286-amino-acid chain; its full sequence is ATP synthase gamma chain (286 aa).

It belongs to the ATPase gamma chain family. In terms of assembly, F-type ATPases have 2 components, CF(1) - the catalytic core - and CF(0) - the membrane proton channel. CF(1) has five subunits: alpha(3), beta(3), gamma(1), delta(1), epsilon(1). CF(0) has three main subunits: a, b and c.

It localises to the cell membrane. Produces ATP from ADP in the presence of a proton gradient across the membrane. The gamma chain is believed to be important in regulating ATPase activity and the flow of protons through the CF(0) complex. The sequence is that of ATP synthase gamma chain from Bacillus anthracis (strain A0248).